We begin with the raw amino-acid sequence, 204 residues long: Peptidyl-tRNA hydrolase 2 (204 aa).

Y37 contributes to the tRNA binding site. H42 functions as the Proton acceptor in the catalytic mechanism. The tRNA site is built by F86, N88, and N134.

This sequence belongs to the PTH family. As to quaternary structure, monomer.

Its subcellular location is the cytoplasm. The enzyme catalyses an N-acyl-L-alpha-aminoacyl-tRNA + H2O = an N-acyl-L-amino acid + a tRNA + H(+). In terms of biological role, hydrolyzes ribosome-free peptidyl-tRNAs (with 1 or more amino acids incorporated), which drop off the ribosome during protein synthesis, or as a result of ribosome stalling. Its function is as follows. Catalyzes the release of premature peptidyl moieties from peptidyl-tRNA molecules trapped in stalled 50S ribosomal subunits, and thus maintains levels of free tRNAs and 50S ribosomes. The chain is Peptidyl-tRNA hydrolase 2 from Corynebacterium glutamicum (strain ATCC 13032 / DSM 20300 / JCM 1318 / BCRC 11384 / CCUG 27702 / LMG 3730 / NBRC 12168 / NCIMB 10025 / NRRL B-2784 / 534).